Consider the following 721-residue polypeptide: Polyribonucleotide nucleotidyltransferase (721 aa).

Residues D486 and D492 each coordinate Mg(2+). A KH domain is found at P553–I612. The region spanning G622–V716 is the S1 motif domain.

Belongs to the polyribonucleotide nucleotidyltransferase family. Mg(2+) serves as cofactor.

The protein resides in the cytoplasm. The catalysed reaction is RNA(n+1) + phosphate = RNA(n) + a ribonucleoside 5'-diphosphate. In terms of biological role, involved in mRNA degradation. Catalyzes the phosphorolysis of single-stranded polyribonucleotides processively in the 3'- to 5'-direction. The protein is Polyribonucleotide nucleotidyltransferase of Borrelia garinii subsp. bavariensis (strain ATCC BAA-2496 / DSM 23469 / PBi) (Borreliella bavariensis).